The sequence spans 611 residues: Urease subunit alpha 2 (611 aa).

A Urease domain is found at glycine 154 to phenylalanine 611. Ni(2+) is bound by residues histidine 159, histidine 161, and lysine 242. An N6-carboxylysine modification is found at lysine 242. Histidine 244 contacts substrate. Histidine 271 and histidine 297 together coordinate Ni(2+). Catalysis depends on histidine 345, which acts as the Proton donor. Aspartate 385 contributes to the Ni(2+) binding site. The interval glycine 411 to aspartate 434 is disordered. Positions serine 418 to aspartate 434 are enriched in polar residues.

This sequence belongs to the metallo-dependent hydrolases superfamily. Urease alpha subunit family. Heterotrimer of UreA (gamma), UreB (beta) and UreC (alpha) subunits. Three heterotrimers associate to form the active enzyme. It depends on Ni cation as a cofactor. In terms of processing, carboxylation allows a single lysine to coordinate two nickel ions.

The protein resides in the cytoplasm. The enzyme catalyses urea + 2 H2O + H(+) = hydrogencarbonate + 2 NH4(+). It functions in the pathway nitrogen metabolism; urea degradation; CO(2) and NH(3) from urea (urease route): step 1/1. The polypeptide is Urease subunit alpha 2 (Psychrobacter cryohalolentis (strain ATCC BAA-1226 / DSM 17306 / VKM B-2378 / K5)).